We begin with the raw amino-acid sequence, 463 residues long: Oxidoreductase OXR1 (463 aa).

6-hydroxy-FAD-binding positions include 59–63 (GGSYS), Val-154, and Asp-366.

It belongs to the FAD-dependent oxidoreductase family. 6-hydroxy-FAD serves as cofactor.

It participates in siderophore biosynthesis. In terms of biological role, oxidoreductase; part of the gene cluster that mediates the biosynthesis of hydroxamate-containing siderophores that play a critical role in virulence via intracellular iron acquisition during macrophage infection. The protein is Oxidoreductase OXR1 of Ajellomyces capsulatus (Darling's disease fungus).